The primary structure comprises 335 residues: Probable nicotianamine synthase 3 (335 aa).

It belongs to the nicotianamine synthase (NAS)-like family.

The catalysed reaction is 3 S-adenosyl-L-methionine = nicotianamine + 3 S-methyl-5'-thioadenosine + 3 H(+). Functionally, synthesizes nicotianamine, a polyamine that is the first intermediate in the synthesis of the phytosiderophores of the mugineic acid type found in gramineae which serves as a sensor for the physiological iron status within the plant, and/or might be involved in the transport of iron. This chain is Probable nicotianamine synthase 3 (NAS3), found in Hordeum vulgare (Barley).